A 513-amino-acid chain; its full sequence is Noroxomaritidine synthase 2 (513 aa).

The helical transmembrane segment at 14-34 (HYPEILIAIACFLIFSLLLSA) threads the bilayer. C458 is a heme binding site.

This sequence belongs to the cytochrome P450 family. Heme serves as cofactor.

It localises to the membrane. The enzyme catalyses 4'-O-methylnorbelladine + reduced [NADPH--hemoprotein reductase] + O2 = (10bR,4aS)-noroxomaritidine + oxidized [NADPH--hemoprotein reductase] + 2 H2O + H(+). The catalysed reaction is 4'-O-methylnorbelladine + reduced [NADPH--hemoprotein reductase] + O2 = (10bS,4aR)-noroxomaritidine + oxidized [NADPH--hemoprotein reductase] + 2 H2O + H(+). Its pathway is alkaloid biosynthesis. Its function is as follows. Cytochrome P450 that catalyzes an intramolecular para-para' C-C phenol coupling of 4'-O-methylnorbelladine in alkaloids biosynthesis, including haemanthamine- and crinamine-type alkaloids, promising anticancer agents. Catalyzes the formation of (10bR,4aS)-noroxomaritidine and (10bS,4aR)-noroxomaritidine from 4'-O-methylnorbelladine. The polypeptide is Noroxomaritidine synthase 2 (Narcissus aff. pseudonarcissus MK-2014 (Daffodil)).